The chain runs to 371 residues: Fe(3+) ions import ATP-binding protein FbpC (371 aa).

The ABC transporter domain maps to 5 to 235; it reads IKIENAQKRY…PANLFVATFI (231 aa). An ATP-binding site is contributed by 37–44; that stretch reads GPSGCGKT.

It belongs to the ABC transporter superfamily. Fe(3+) ion importer (TC 3.A.1.10) family. In terms of assembly, the complex is composed of two ATP-binding proteins (FbpC), two transmembrane proteins (FbpB) and a solute-binding protein (FbpA).

The protein resides in the cell inner membrane. It carries out the reaction Fe(3+)(out) + ATP + H2O = Fe(3+)(in) + ADP + phosphate + H(+). Functionally, part of the ABC transporter complex FbpABC involved in Fe(3+) ions import. Responsible for energy coupling to the transport system. The chain is Fe(3+) ions import ATP-binding protein FbpC from Fusobacterium nucleatum subsp. nucleatum (strain ATCC 25586 / DSM 15643 / BCRC 10681 / CIP 101130 / JCM 8532 / KCTC 2640 / LMG 13131 / VPI 4355).